The sequence spans 573 residues: MAEQEYDLIVVGSGAGACWAPIRAQEQGLKTLVVEKTELFGGTSALSGGGIWIPLNYDQKTAGIKDDLETAFGYMKRCVRGMATDDRVLAYVETASKMAEYLRQIGIPYRAMAKYADYYPHIEGSRPGGRTMDPVDFNAARLRVTALETMRPGPPGNQLFGRMSISAFEAHSMLSRELKSRFTILGIMLKYFLDYPWRNKTRRDRRMTGGQALVAGLLTAANKARVEMWCNSPLKELVQDASGRVTGVIVERNGQRQQINARRGVLLGAGGFERNQEMRDQYLNKPTRLVDGNPCGRQYGDAHRAGQAWAHTGADGLVLGRAHHGCSQGAGLSRHFRGTLAAGVHGGQRQGAALPQRVRPVSGIPAAMLAENAKGNGGVPAWIVFDASFRAQNPMGPLMPGSAVPDSKVRKSWLNNVYWKGRRWKIWRADRRGRAGLQVSARRMTEYARAGKDLDFDRGGNVFDRYYGDPRLKNPNLGPIEKGPFYAMRLWPGEIGTKGGLLTDREGRVLDTQGRIIEGLYCVGNNSASVMAPAYAGAGSTLGPAMTFAFRAVADMVGKPLPLENPHLLGKTV.

7–36 (DLIVVGSGAGACWAPIRAQEQGLKTLVVEK) provides a ligand contact to FAD.

The protein belongs to the FAD-dependent oxidoreductase 2 family. 3-oxosteroid dehydrogenase subfamily. FAD serves as cofactor.

The protein resides in the cell inner membrane. It catalyses the reaction a 3-oxosteroid + A = a 3-oxo-Delta(1)-steroid + AH2. It participates in lipid metabolism; steroid degradation. Functionally, dehydrogenates steroids by introducing a double bond in steroid ring A. The chain is 3-oxosteroid 1-dehydrogenase from Comamonas testosteroni (Pseudomonas testosteroni).